Reading from the N-terminus, the 412-residue chain is MKIYLVGGAVRDALLGLSVKDRDWVVVGSTPQEMLDAGYQQVGRDFPVFLHPQTHEEYALARTERKSGSGYTGFTCYTAPDVTLEDDLKRRDLTINALAQDDNGEIIDPYNGLGDLQNRLLRHVSPAFGEDPLRVLRVARFAARYAHLGFRIADETLTLMREMTHAGELEHLTPERVWKETESALTTRNPQVFFQVLRDCGALRVLFPEIDALFGVPAPARWHPEIDTGIHTLMTLSMAAMLSPQVDVRFATLCHDLGKGLTPPELWPRHHGHGPAGVKLVEQLCQRLRVPNEIRDLARLVAEFHDLIRTFPMLNPKTIVKLFDSIDAWRKPQRVEQLALTSEADVRGRTGFESADYPQGRWLREGWEVAQSVPTKAVVEAGFKGVEIREELTRRRIAAVASWKEQRCPKPD.

ATP is bound by residues Gly-8 and Arg-11. CTP is bound by residues Gly-8 and Arg-11. Residues Asp-21 and Asp-23 each contribute to the Mg(2+) site. Arg-91, Arg-137, and Arg-140 together coordinate ATP. The CTP site is built by Arg-91, Arg-137, and Arg-140. Positions Thr-228–Trp-329 constitute an HD domain.

It belongs to the tRNA nucleotidyltransferase/poly(A) polymerase family. Bacterial CCA-adding enzyme type 1 subfamily. In terms of assembly, monomer. Can also form homodimers and oligomers. Requires Mg(2+) as cofactor. It depends on Ni(2+) as a cofactor.

The enzyme catalyses a tRNA precursor + 2 CTP + ATP = a tRNA with a 3' CCA end + 3 diphosphate. The catalysed reaction is a tRNA with a 3' CCA end + 2 CTP + ATP = a tRNA with a 3' CCACCA end + 3 diphosphate. Functionally, catalyzes the addition and repair of the essential 3'-terminal CCA sequence in tRNAs without using a nucleic acid template. Adds these three nucleotides in the order of C, C, and A to the tRNA nucleotide-73, using CTP and ATP as substrates and producing inorganic pyrophosphate. tRNA 3'-terminal CCA addition is required both for tRNA processing and repair. Also involved in tRNA surveillance by mediating tandem CCA addition to generate a CCACCA at the 3' terminus of unstable tRNAs. While stable tRNAs receive only 3'-terminal CCA, unstable tRNAs are marked with CCACCA and rapidly degraded. The polypeptide is Multifunctional CCA protein (Shigella flexneri).